A 197-amino-acid polypeptide reads, in one-letter code: MPKVGMQPIRRQQLIEATLQAVDQVGMGDASIALIARLAGVSNGIISHYFRDKNGLIAATMGYIMSMLNEGVRARRQALTDDSPRAHLKVIIEGNFDASQVNGPAMKTWLAFWASSMHQPDLHRLQRINDHRLYSNLCCQFRRALPLYHARKAARGLAALIDGLWLRGALSGDAFDTDQAIRIAYEYMDLQLAKQER.

The 61-residue stretch at 8–68 (PIRRQQLIEA…ATMGYIMSML (61 aa)) folds into the HTH tetR-type domain. The segment at residues 31–50 (SIALIARLAGVSNGIISHYF) is a DNA-binding region (H-T-H motif).

The protein operates within amine and polyamine biosynthesis; betaine biosynthesis via choline pathway [regulation]. In terms of biological role, repressor involved in the biosynthesis of the osmoprotectant glycine betaine. It represses transcription of the choline transporter BetT and the genes of BetAB involved in the synthesis of glycine betaine. This Pseudomonas fluorescens (strain ATCC BAA-477 / NRRL B-23932 / Pf-5) protein is HTH-type transcriptional regulator BetI.